Consider the following 393-residue polypeptide: NAD(P)H-quinone oxidoreductase subunit H, chloroplastic (393 aa).

It belongs to the complex I 49 kDa subunit family. As to quaternary structure, NDH is composed of at least 16 different subunits, 5 of which are encoded in the nucleus.

The protein localises to the plastid. It is found in the chloroplast thylakoid membrane. It carries out the reaction a plastoquinone + NADH + (n+1) H(+)(in) = a plastoquinol + NAD(+) + n H(+)(out). It catalyses the reaction a plastoquinone + NADPH + (n+1) H(+)(in) = a plastoquinol + NADP(+) + n H(+)(out). Functionally, NDH shuttles electrons from NAD(P)H:plastoquinone, via FMN and iron-sulfur (Fe-S) centers, to quinones in the photosynthetic chain and possibly in a chloroplast respiratory chain. The immediate electron acceptor for the enzyme in this species is believed to be plastoquinone. Couples the redox reaction to proton translocation, and thus conserves the redox energy in a proton gradient. The protein is NAD(P)H-quinone oxidoreductase subunit H, chloroplastic of Hordeum vulgare (Barley).